A 645-amino-acid chain; its full sequence is Phosphomethylpyrimidine synthase (645 aa).

Residues N235, M264, Y293, H329, 349 to 351 (SRG), 390 to 393 (DGLR), and E429 contribute to the substrate site. H433 contributes to the Zn(2+) binding site. Position 456 (Y456) interacts with substrate. Position 497 (H497) interacts with Zn(2+). Positions 577, 580, and 585 each coordinate [4Fe-4S] cluster.

This sequence belongs to the ThiC family. As to quaternary structure, homodimer. [4Fe-4S] cluster serves as cofactor.

The catalysed reaction is 5-amino-1-(5-phospho-beta-D-ribosyl)imidazole + S-adenosyl-L-methionine = 4-amino-2-methyl-5-(phosphooxymethyl)pyrimidine + CO + 5'-deoxyadenosine + formate + L-methionine + 3 H(+). It participates in cofactor biosynthesis; thiamine diphosphate biosynthesis. In terms of biological role, catalyzes the synthesis of the hydroxymethylpyrimidine phosphate (HMP-P) moiety of thiamine from aminoimidazole ribotide (AIR) in a radical S-adenosyl-L-methionine (SAM)-dependent reaction. The chain is Phosphomethylpyrimidine synthase from Vibrio cholerae serotype O1 (strain ATCC 39541 / Classical Ogawa 395 / O395).